A 189-amino-acid chain; its full sequence is MKYRYFAKKSFLFISMLAAFKTFAFELPSVPFPAPGSDEILFVVRDATFNTNAPVNVKVSDFWTNRNVKRKPYKDVYGQSVFTTSGTKWLTSYMTVNINDKDYTMAAVSGYKRGHSAVFVKSDQVQLQHSYNSVANFVGEDEDSIPSKMYLDETPEYFVNVEAYESGSGNILVMCISNKESFFECEHQK.

A signal peptide spans 1-24 (MKYRYFAKKSFLFISMLAAFKTFA). Residues Cys-175 and Cys-185 are joined by a disulfide bond.

Belongs to the TDH hemolysin family. Homodimer.

Its function is as follows. Bacterial hemolysins are exotoxins that attack blood cell membranes and cause cell rupture by mechanisms not clearly defined. This is Thermostable direct hemolysin-related (tdh3) from Vibrio parahaemolyticus.